The sequence spans 153 residues: H/ACA ribonucleoprotein complex subunit 2 (153 aa).

Residue K3 forms a Glycyl lysine isopeptide (Lys-Gly) (interchain with G-Cter in SUMO2) linkage. A Glycyl lysine isopeptide (Lys-Gly) (interchain with G-Cter in SUMO); alternate cross-link involves residue K5. K5 is covalently cross-linked (Glycyl lysine isopeptide (Lys-Gly) (interchain with G-Cter in SUMO1); alternate). K5 participates in a covalent cross-link: Glycyl lysine isopeptide (Lys-Gly) (interchain with G-Cter in SUMO2); alternate. At S19 the chain carries Phosphoserine.

Belongs to the eukaryotic ribosomal protein eL8 family. In terms of assembly, part of the H/ACA small nucleolar ribonucleoprotein (H/ACA snoRNP) complex, which contains NHP2/NOLA2, GAR1/NOLA1, NOP10/NOLA3, and DKC1/NOLA4, which is presumed to be the catalytic subunit. The complex contains a stable core formed by binding of one or two NOP10-DKC1 heterodimers to NHP2; GAR1 subsequently binds to this core via DKC1. The complex binds a box H/ACA small nucleolar RNA (snoRNA), which may target the specific site of modification within the RNA substrate. During assembly, the complex contains NAF1 instead of GAR1/NOLA1. The complex also interacts with TERC, which contains a 3'-terminal domain related to the box H/ACA snoRNAs. Specific interactions with snoRNAs or TERC are mediated by GAR1 and NHP2. Associates with NOLC1/NOPP140. H/ACA snoRNPs interact with the SMN complex, consisting of SMN1 or SMN2, GEMIN2/SIP1, DDX20/GEMIN3, and GEMIN4. This is mediated by interaction between GAR1 and SMN1 or SMN2. The SMN complex may be required for correct assembly of the H/ACA snoRNP complex. Component of the telomerase holoenzyme complex composed of one molecule of TERT, one molecule of WRAP53/TCAB1, two molecules of H/ACA ribonucleoprotein complex subunits DKC1, NOP10, NHP2 and GAR1, and a telomerase RNA template component (TERC). The telomerase holoenzyme complex is associated with TEP1, SMG6/EST1A and POT1.

The protein resides in the nucleus. The protein localises to the nucleolus. It localises to the cajal body. In terms of biological role, required for ribosome biogenesis and telomere maintenance. Part of the H/ACA small nucleolar ribonucleoprotein (H/ACA snoRNP) complex, which catalyzes pseudouridylation of rRNA. This involves the isomerization of uridine such that the ribose is subsequently attached to C5, instead of the normal N1. Each rRNA can contain up to 100 pseudouridine ('psi') residues, which may serve to stabilize the conformation of rRNAs. May also be required for correct processing or intranuclear trafficking of TERC, the RNA component of the telomerase reverse transcriptase (TERT) holoenzyme. This is H/ACA ribonucleoprotein complex subunit 2 (NHP2) from Pongo abelii (Sumatran orangutan).